We begin with the raw amino-acid sequence, 233 residues long: Thymidylate kinase (233 aa).

10-17 (GVDGVGKT) lines the ATP pocket.

The protein belongs to the thymidylate kinase family.

It catalyses the reaction dTMP + ATP = dTDP + ADP. Its function is as follows. Phosphorylation of dTMP to form dTDP in both de novo and salvage pathways of dTTP synthesis. The chain is Thymidylate kinase from Bifidobacterium longum subsp. infantis (strain ATCC 15697 / DSM 20088 / JCM 1222 / NCTC 11817 / S12).